The primary structure comprises 206 residues: Large ribosomal subunit protein uL4 (206 aa).

Positions 48–59 (THDTKTRSEVRG) are enriched in basic and acidic residues. Positions 48 to 77 (THDTKTRSEVRGGGRKPWRQKGTGRARHGS) are disordered. A compositionally biased stretch (basic residues) spans 60–77 (GGRKPWRQKGTGRARHGS).

It belongs to the universal ribosomal protein uL4 family. As to quaternary structure, part of the 50S ribosomal subunit.

Functionally, one of the primary rRNA binding proteins, this protein initially binds near the 5'-end of the 23S rRNA. It is important during the early stages of 50S assembly. It makes multiple contacts with different domains of the 23S rRNA in the assembled 50S subunit and ribosome. Its function is as follows. Forms part of the polypeptide exit tunnel. The chain is Large ribosomal subunit protein uL4 from Pelotomaculum thermopropionicum (strain DSM 13744 / JCM 10971 / SI).